A 162-amino-acid polypeptide reads, in one-letter code: Interleukin-15 (162 aa).

The N-terminal stretch at 1–29 is a signal peptide; the sequence is MRILKPYLRSTSIQCYLCLLLNSHFLTEA. Residues 30–48 constitute a propeptide that is removed on maturation; that stretch reads GIHVFILGCISAGLPKTEA. 2 cysteine pairs are disulfide-bonded: cysteine 83–cysteine 133 and cysteine 90–cysteine 136. Asparagine 113, asparagine 121, and asparagine 127 each carry an N-linked (GlcNAc...) asparagine glycan.

This sequence belongs to the IL-15/IL-21 family.

It localises to the secreted. Functionally, cytokine that plays a major role in the development of inflammatory and protective immune responses to microbial invaders and parasites by modulating immune cells of both the innate and adaptive immune systems. Stimulates the proliferation of natural killer cells, T-cells and B-cells and promotes the secretion of several cytokines. In monocytes, induces the production of IL8 and monocyte chemotactic protein 1/CCL2, two chemokines that attract neutrophils and monocytes respectively to sites of infection. Unlike most cytokines, which are secreted in soluble form, IL15 is expressed in association with its high affinity IL15RA on the surface of IL15-producing cells and delivers signals to target cells that express IL2RB and IL2RG receptor subunits. Binding to its receptor triggers the phosphorylation of JAK1 and JAK3 and the recruitment and subsequent phosphorylation of signal transducer and activator of transcription-3/STAT3 and STAT5. In mast cells, induces the rapid tyrosine phosphorylation of STAT6 and thereby controls mast cell survival and release of cytokines such as IL4. In Ovis aries (Sheep), this protein is Interleukin-15 (IL15).